Here is a 581-residue protein sequence, read N- to C-terminus: Jasmonoyl--L-amino acid synthetase GH3.5 (581 aa).

An ATP-binding site is contributed by Ser92. Ser95 is a binding site for jasmonate. Residues Thr115, Asn161, and 324–329 (GASEGW) each bind ATP. 159 to 163 (TTNLY) contacts an L-alpha-amino acid. Jasmonate is bound by residues 321-324 (ADYG) and Ser326. An L-alpha-amino acid is bound at residue 534–538 (EILDH). Residue Lys561 coordinates ATP.

Belongs to the IAA-amido conjugating enzyme family. As to expression, expressed in green shoots, roots and flowers.

The catalysed reaction is a jasmonate + an L-alpha-amino acid + ATP = a jasmonyl-L-amino acid + AMP + diphosphate + H(+). In terms of biological role, catalyzes the synthesis of jasmonate-amino acid conjugates by adenylation. Catalyzes the conjugation of jasmonate (JA) to Ile when expressed in a heterologous system (E.coli). Catalyzes in vitro the conjugation of jasmonate (JA) to Ile, Phe, Cys, Leu, Met, Ala, Val and Trp. Involved in the production of JA-Ile in response to infection by the rice blast fungus Magnaporthe oryzae. Required for the accumulation of the flavonoid phytoalexin sakuranetin in response to infection by the rice blast fungus. Involved in herbivory-induced JA-Ile accumulation. Involved in the production of JA-Ile in response to wounding. Required for modulation of light and JA signaling in photomorphogenesis. Required for normal seed development. Required for optimal flower opening and closing and anther dehiscence. May catalyze the synthesis of indole-3-acetic acid (IAA)-amino acid conjugates, providing a mechanism for the plant to cope with the presence of excess auxin. The sequence is that of Jasmonoyl--L-amino acid synthetase GH3.5 from Oryza sativa subsp. japonica (Rice).